The primary structure comprises 304 residues: Quinolinate synthase (304 aa).

His-23 and Ser-40 together coordinate iminosuccinate. Residue Cys-85 participates in [4Fe-4S] cluster binding. Residues 111-113 and Ser-128 each bind iminosuccinate; that span reads YVN. Cys-171 contacts [4Fe-4S] cluster. Iminosuccinate is bound by residues 197–199 and Thr-214; that span reads HPE. Cys-259 is a binding site for [4Fe-4S] cluster.

Belongs to the quinolinate synthase family. Type 2 subfamily. Requires [4Fe-4S] cluster as cofactor.

It is found in the cytoplasm. It catalyses the reaction iminosuccinate + dihydroxyacetone phosphate = quinolinate + phosphate + 2 H2O + H(+). Its pathway is cofactor biosynthesis; NAD(+) biosynthesis; quinolinate from iminoaspartate: step 1/1. In terms of biological role, catalyzes the condensation of iminoaspartate with dihydroxyacetone phosphate to form quinolinate. This is Quinolinate synthase from Pelobacter propionicus (strain DSM 2379 / NBRC 103807 / OttBd1).